We begin with the raw amino-acid sequence, 412 residues long: Phospholipase A1-IIdelta (412 aa).

Residue Ala2 is modified to N-acetylalanine. The Acyl-ester intermediate role is filled by Ser238. Active-site charge relay system residues include Ser238, Asp297, and His336.

The protein belongs to the AB hydrolase superfamily. Lipase family. As to expression, expressed in leaves, stems, flowers and siliques, and, at low levels, in seeds and roots (at protein level).

Its subcellular location is the cytoplasm. Acylhydrolase that catalyzes the hydrolysis of phosphatidylcholine (PC) at the sn-1 position. High activity toward PC, medium activity toward monogalactosyldiacylglycerol (MGDG) and low activity toward triacylglycerol (TAG). Confers sensitivity to UV-B radiation probably by deesterifying membrane phospholipids. The sequence is that of Phospholipase A1-IIdelta from Arabidopsis thaliana (Mouse-ear cress).